We begin with the raw amino-acid sequence, 403 residues long: Subtilisin-like protease CPC735_035780 (403 aa).

A signal peptide spans 1 to 19; that stretch reads MSIMKIATLFFAALSAVEA. Residues 20-117 constitute a propeptide that is removed on maturation; sequence AKLLTPSDKR…VEPDRRVHLT (98 aa). In terms of domain architecture, Inhibitor I9 spans 35–116; the sequence is SYIVVMKDNV…YVEPDRRVHL (82 aa). Residues 127–403 enclose the Peptidase S8 domain; sequence SWGLGRISHR…NKLLYNNSGR (277 aa). Active-site charge relay system residues include Asp-159 and His-190. Residues Asn-233 and Asn-251 are each glycosylated (N-linked (GlcNAc...) asparagine). Ser-349 functions as the Charge relay system in the catalytic mechanism. An N-linked (GlcNAc...) asparagine glycan is attached at Asn-399.

The protein belongs to the peptidase S8 family.

The protein resides in the secreted. Secreted subtilisin-like serine protease with keratinolytic activity that contributes to pathogenicity. The sequence is that of Subtilisin-like protease CPC735_035780 from Coccidioides posadasii (strain C735) (Valley fever fungus).